An 887-amino-acid polypeptide reads, in one-letter code: Pyruvate dehydrogenase E1 component (887 aa).

Positions 231, 261, and 263 each coordinate Mg(2+). Lysine 716 carries the N6-acetyllysine modification.

As to quaternary structure, homodimer. Part of the PDH complex, consisting of multiple copies of pyruvate dehydrogenase (E1), dihydrolipoamide acetyltransferase (E2) and lipoamide dehydrogenase (E3). It depends on Mg(2+) as a cofactor. The cofactor is thiamine diphosphate.

The enzyme catalyses N(6)-[(R)-lipoyl]-L-lysyl-[protein] + pyruvate + H(+) = N(6)-[(R)-S(8)-acetyldihydrolipoyl]-L-lysyl-[protein] + CO2. Functionally, component of the pyruvate dehydrogenase (PDH) complex, that catalyzes the overall conversion of pyruvate to acetyl-CoA and CO(2). The sequence is that of Pyruvate dehydrogenase E1 component (aceE) from Escherichia coli O157:H7.